A 108-amino-acid polypeptide reads, in one-letter code: UPF0145 protein LGAS_1099 (108 aa).

It belongs to the UPF0145 family.

The protein is UPF0145 protein LGAS_1099 of Lactobacillus gasseri (strain ATCC 33323 / DSM 20243 / BCRC 14619 / CIP 102991 / JCM 1131 / KCTC 3163 / NCIMB 11718 / NCTC 13722 / AM63).